The primary structure comprises 272 residues: Sulfate transporter CysZ (272 aa).

The next 4 helical transmembrane spans lie at 29–49, 66–86, 148–168, and 219–239; these read FVIM…WLFI, WLSF…LLLF, IIAL…VPVL, and FVPV…TLMW.

It belongs to the CysZ family.

The protein localises to the cell inner membrane. In terms of biological role, high affinity, high specificity proton-dependent sulfate transporter, which mediates sulfate uptake. Provides the sulfur source for the cysteine synthesis pathway. This chain is Sulfate transporter CysZ, found in Haemophilus influenzae (strain PittGG).